Consider the following 385-residue polypeptide: Cytochrome b (385 aa).

A run of 4 helical transmembrane segments spans residues 32–52 (MGSL…FMAM), 76–98 (YILR…MHMA), 113–133 (LWNV…LGYC), and 179–199 (FFAL…MHLM). Positions 82 and 96 each coordinate heme b. 2 residues coordinate heme b: His183 and His197. His202 provides a ligand contact to a ubiquinone. A run of 4 helical transmembrane segments spans residues 225–245 (FIFK…LFVF), 289–309 (LLGV…PFTD), 321–341 (LSKF…QIGA), and 348–368 (YVLM…IIVP).

It belongs to the cytochrome b family. Fungal cytochrome b-c1 complex contains 10 subunits; 3 respiratory subunits, 2 core proteins and 5 low-molecular weight proteins. Cytochrome b-c1 complex is a homodimer. Heme b is required as a cofactor.

It localises to the mitochondrion inner membrane. Component of the ubiquinol-cytochrome c reductase complex (complex III or cytochrome b-c1 complex) that is part of the mitochondrial respiratory chain. The b-c1 complex mediates electron transfer from ubiquinol to cytochrome c. Contributes to the generation of a proton gradient across the mitochondrial membrane that is then used for ATP synthesis. This chain is Cytochrome b (COB), found in Saccharomyces paradoxus (Yeast).